The sequence spans 82 residues: Acyl carrier protein (82 aa).

Residues 4–79 form the Carrier domain; it reads PEMEARLKQI…DALNYIEQKL (76 aa). An O-(pantetheine 4'-phosphoryl)serine modification is found at serine 39.

Belongs to the acyl carrier protein (ACP) family. In terms of processing, 4'-phosphopantetheine is transferred from CoA to a specific serine of apo-ACP by AcpS. This modification is essential for activity because fatty acids are bound in thioester linkage to the sulfhydryl of the prosthetic group.

Its subcellular location is the cytoplasm. The protein operates within lipid metabolism; fatty acid biosynthesis. Functionally, carrier of the growing fatty acid chain in fatty acid biosynthesis. The protein is Acyl carrier protein of Roseiflexus castenholzii (strain DSM 13941 / HLO8).